The sequence spans 176 residues: MDLPGPIHDFLLVFLGSGLLVGGLGVVLLPNPIFSAFSLGFVLVCISLLYILSNSHFVAAAQLLIYVGAINVLIIFAVMFMNDSEYSTDFNLWTVGNGITSLVCTTILFLLMSTILDTSWYGVIWTTKLNQILEQDLISNSQQIGIHLSTDFFLPFELISIILLVALIGAISVARQ.

5 helical membrane-spanning segments follow: residues 10–30 (FLLV…VLLP), 32–52 (PIFS…LYIL), 61–81 (AQLL…VMFM), 92–112 (LWTV…FLLM), and 152–172 (FFLP…GAIS).

The protein belongs to the complex I subunit 6 family. In terms of assembly, NDH is composed of at least 16 different subunits, 5 of which are encoded in the nucleus.

Its subcellular location is the plastid. It is found in the chloroplast thylakoid membrane. It carries out the reaction a plastoquinone + NADH + (n+1) H(+)(in) = a plastoquinol + NAD(+) + n H(+)(out). It catalyses the reaction a plastoquinone + NADPH + (n+1) H(+)(in) = a plastoquinol + NADP(+) + n H(+)(out). Its function is as follows. NDH shuttles electrons from NAD(P)H:plastoquinone, via FMN and iron-sulfur (Fe-S) centers, to quinones in the photosynthetic chain and possibly in a chloroplast respiratory chain. The immediate electron acceptor for the enzyme in this species is believed to be plastoquinone. Couples the redox reaction to proton translocation, and thus conserves the redox energy in a proton gradient. The chain is NAD(P)H-quinone oxidoreductase subunit 6, chloroplastic (ndhG) from Capsella bursa-pastoris (Shepherd's purse).